The primary structure comprises 464 residues: L-aspartate oxidase (464 aa).

FAD is bound by residues serine 8 to alanine 11 and asparagine 37 to glycine 44. Catalysis depends on arginine 248, which acts as the Proton donor/acceptor. FAD contacts are provided by residues glutamate 329 and serine 345–leucine 346.

It belongs to the FAD-dependent oxidoreductase 2 family. NadB subfamily. The cofactor is FAD.

It localises to the cytoplasm. It catalyses the reaction L-aspartate + O2 = iminosuccinate + H2O2. It participates in cofactor biosynthesis; NAD(+) biosynthesis; iminoaspartate from L-aspartate (oxidase route): step 1/1. Catalyzes the oxidation of L-aspartate to iminoaspartate, the first step in the de novo biosynthesis of NAD(+). This is L-aspartate oxidase (nadB) from Pyrococcus furiosus (strain ATCC 43587 / DSM 3638 / JCM 8422 / Vc1).